Reading from the N-terminus, the 152-residue chain is Interleukin-1 family member 10 (152 aa).

Belongs to the IL-1 family. In terms of assembly, interacts with cargo receptor TMED10; the interaction mediates the translocation from the cytoplasm into the ERGIC (endoplasmic reticulum-Golgi intermediate compartment) and thereby secretion. In terms of tissue distribution, expressed in fetal skin, spleen and tonsil. Expressed mostly in the basal epithelia of skin and in proliferating B-cells of the tonsil.

The protein resides in the cytoplasm. It is found in the secreted. Functionally, cytokine with immunomodulatory activity. Alone, does not induce cytokine production, but reduces IL22 and IL17A production by T-cells in response to heat-killed Candida albicans. Reduces IL36G-induced production of IL8 by peripheral blood mononuclear cells. Increases IL6 production by dendritic cells stimulated by bacterial lipopolysaccharides (LPS). Ligand for IL-36R/IL1RL2. This chain is Interleukin-1 family member 10, found in Homo sapiens (Human).